We begin with the raw amino-acid sequence, 91 residues long: Small ribosomal subunit protein bS20 (91 aa).

A disordered region spans residues 1–26 (MANLKSSKKDIRRTARRKERNGEDRT).

Belongs to the bacterial ribosomal protein bS20 family.

Functionally, binds directly to 16S ribosomal RNA. The polypeptide is Small ribosomal subunit protein bS20 (Leptospira biflexa serovar Patoc (strain Patoc 1 / Ames)).